The chain runs to 649 residues: Replication factor C small subunit (649 aa).

55–385 (GPAGVGKCVT…GCIPTVMHNT (331 aa)) is a binding site for ATP.

The protein belongs to the activator 1 small subunits family. RfcS subfamily. In terms of assembly, heteromultimer composed of small subunits (RfcS) and large subunits (RfcL). Post-translationally, this protein undergoes a protein self splicing that involves a post-translational excision of the intervening region (intein) followed by peptide ligation.

In terms of biological role, part of the RFC clamp loader complex which loads the PCNA sliding clamp onto DNA. In Haloquadratum walsbyi (strain DSM 16790 / HBSQ001), this protein is Replication factor C small subunit (rfcS).